Consider the following 570-residue polypeptide: Sorting nexin-41 (570 aa).

Disordered regions lie at residues 1 to 31 (MSDF…PSAS) and 81 to 115 (FDDG…TTAS). Over residues 84–101 (GSNSFSATPTASITNQND) the composition is skewed to polar residues. Positions 98–236 (NQNDTAHEAT…RFLDPHASWS (139 aa)) constitute a PX domain. Residues R153, S155, K179, and R202 each contribute to the a 1,2-diacyl-sn-glycero-3-phospho-(1D-myo-inositol-3-phosphate) site. A disordered region spans residues 429-498 (DSQRINDALG…ASRRQGIGKT (70 aa)). The span at 440-454 (TRSNNGPSTTNSGEQ) shows a compositional bias: polar residues. Residues 455 to 464 (PSASPAPKKS) show a composition bias toward low complexity.

This sequence belongs to the sorting nexin family.

Its subcellular location is the endosome membrane. The protein localises to the endomembrane system. Functionally, may be required for cytoplasm to vacuole transport (Cvt) and pexophagy. This is Sorting nexin-41 (SNX41) from Yarrowia lipolytica (strain CLIB 122 / E 150) (Yeast).